The primary structure comprises 207 residues: Thiamine-phosphate synthase (207 aa).

4-amino-2-methyl-5-(diphosphooxymethyl)pyrimidine contacts are provided by residues 37 to 41 (QLREK) and asparagine 69. Mg(2+) is bound by residues aspartate 70 and aspartate 89. Serine 108 contributes to the 4-amino-2-methyl-5-(diphosphooxymethyl)pyrimidine binding site. 134 to 136 (TGS) serves as a coordination point for 2-[(2R,5Z)-2-carboxy-4-methylthiazol-5(2H)-ylidene]ethyl phosphate. Lysine 137 lines the 4-amino-2-methyl-5-(diphosphooxymethyl)pyrimidine pocket. Residues glycine 165 and 185–186 (IS) each bind 2-[(2R,5Z)-2-carboxy-4-methylthiazol-5(2H)-ylidene]ethyl phosphate.

Belongs to the thiamine-phosphate synthase family. Mg(2+) serves as cofactor.

The enzyme catalyses 2-[(2R,5Z)-2-carboxy-4-methylthiazol-5(2H)-ylidene]ethyl phosphate + 4-amino-2-methyl-5-(diphosphooxymethyl)pyrimidine + 2 H(+) = thiamine phosphate + CO2 + diphosphate. It catalyses the reaction 2-(2-carboxy-4-methylthiazol-5-yl)ethyl phosphate + 4-amino-2-methyl-5-(diphosphooxymethyl)pyrimidine + 2 H(+) = thiamine phosphate + CO2 + diphosphate. It carries out the reaction 4-methyl-5-(2-phosphooxyethyl)-thiazole + 4-amino-2-methyl-5-(diphosphooxymethyl)pyrimidine + H(+) = thiamine phosphate + diphosphate. Its pathway is cofactor biosynthesis; thiamine diphosphate biosynthesis; thiamine phosphate from 4-amino-2-methyl-5-diphosphomethylpyrimidine and 4-methyl-5-(2-phosphoethyl)-thiazole: step 1/1. Condenses 4-methyl-5-(beta-hydroxyethyl)thiazole monophosphate (THZ-P) and 2-methyl-4-amino-5-hydroxymethyl pyrimidine pyrophosphate (HMP-PP) to form thiamine monophosphate (TMP). The chain is Thiamine-phosphate synthase from Desulfitobacterium hafniense (strain Y51).